Here is a 684-residue protein sequence, read N- to C-terminus: Ubinuclein-1 (684 aa).

Disordered stretches follow at residues 108-137 (YKGN…FIDD), 157-287 (YVNR…LGKS), 311-332 (NVTG…VKSK), 609-631 (MVDR…CNPT), and 660-684 (PQTR…NLPS). Over residues 114–137 (SDGEELDGAPDDDEYDTEDSFIDD) the composition is skewed to acidic residues. 2 stretches are compositionally biased toward basic and acidic residues: residues 157–167 (YVNRGKLERME) and 184–199 (SAKP…DKHT). Polar residues predominate over residues 211 to 235 (STAPGSWKTQESPLPSGAQDANTSV). The span at 238 to 260 (DDVKHSDRANHQSRNDTSHKSRE) shows a compositional bias: basic and acidic residues. Composition is skewed to polar residues over residues 261-284 (TGSS…TSLL), 311-321 (NVTGSRQSSQA), 611-631 (DRSN…CNPT), and 669-684 (QNLN…NLPS).

It belongs to the ubinuclein family. In terms of assembly, component of the HIRA complex made of UBN1, UBN2, ASF1A, CABIN1 and HIRA. Interacts with HIRA.

The protein resides in the nucleus. Its subcellular location is the nucleolus. Its function is as follows. May be required for replication-independent chromatin assembly. The sequence is that of Ubinuclein-1 from Arabidopsis thaliana (Mouse-ear cress).